The primary structure comprises 822 residues: Ribonucleoside-diphosphate reductase large subunit (822 aa).

Substrate contacts are provided by residues Thr-249, 264 to 265, Gly-295, 470 to 474, and 651 to 655; these read SC, NLCTE, and PTAAS. A disulfide bridge links Cys-265 with Cys-487. Asn-470 acts as the Proton acceptor in catalysis. The active-site Cysteine radical intermediate is Cys-472. Glu-474 (proton acceptor) is an active-site residue.

It belongs to the ribonucleoside diphosphate reductase large chain family. As to quaternary structure, heterotetramer composed of a homodimer of the large subunit (R1) and a homodimer of the small subunit (R2). Larger multisubunit protein complex are also active, composed of (R1)n(R2)n.

The catalysed reaction is a 2'-deoxyribonucleoside 5'-diphosphate + [thioredoxin]-disulfide + H2O = a ribonucleoside 5'-diphosphate + [thioredoxin]-dithiol. In terms of biological role, ribonucleoside-diphosphate reductase holoenzyme provides the precursors necessary for viral DNA synthesis. Allows virus growth in non-dividing cells, as well as reactivation from latency in infected hosts. Catalyzes the biosynthesis of deoxyribonucleotides from the corresponding ribonucleotides. The protein is Ribonucleoside-diphosphate reductase large subunit of Gallus gallus (Chicken).